We begin with the raw amino-acid sequence, 274 residues long: Large ribosomal subunit protein uL2 (274 aa).

Residues 222–274 are disordered; sequence GVAMNPVDHPHGGGEGRGKGHHPQSPWGQLAKGYKTRRGKKASDKLIVRRRNG. The segment covering 229–239 has biased composition (basic and acidic residues); sequence DHPHGGGEGRG.

Belongs to the universal ribosomal protein uL2 family. As to quaternary structure, part of the 50S ribosomal subunit. Forms a bridge to the 30S subunit in the 70S ribosome.

One of the primary rRNA binding proteins. Required for association of the 30S and 50S subunits to form the 70S ribosome, for tRNA binding and peptide bond formation. It has been suggested to have peptidyltransferase activity; this is somewhat controversial. Makes several contacts with the 16S rRNA in the 70S ribosome. This Thermosipho melanesiensis (strain DSM 12029 / CIP 104789 / BI429) protein is Large ribosomal subunit protein uL2.